A 732-amino-acid polypeptide reads, in one-letter code: Wall-associated receptor kinase 2 (732 aa).

The N-terminal stretch at 1 to 23 (MKVQEGLFVVAVFYLAYTQLVKG) is a signal peptide. Residues 24-329 (QPRKECQTRC…RKVRPEYFRW (306 aa)) are Extracellular-facing. Asn-57, Asn-75, Asn-111, Asn-154, Asn-217, and Asn-246 each carry an N-linked (GlcNAc...) asparagine glycan. The EGF-like 1 domain occupies 230-277 (GDKTCKQVEYRGVCGGNSTCFDSTGGTGYNCKCLEGFEGNPYLPNGCQ). Cystine bridges form between Cys-234–Cys-249, Cys-243–Cys-260, Cys-262–Cys-276, Cys-282–Cys-295, Cys-289–Cys-304, and Cys-306–Cys-318. Positions 278–319 (DINECISSRHNCSEHSTCENTKGSFNCNCPSGYRKDSLNSCT) constitute an EGF-like 2; calcium-binding domain. A glycan (N-linked (GlcNAc...) asparagine) is linked at Asn-288. Residues 330-350 (TQIFLGTTIGFSVIMLGISCL) traverse the membrane as a helical segment. At 351 to 732 (QQKIKHRKNT…VTTLDIEAGR (382 aa)) the chain is on the cytoplasmic side. Residue Thr-393 is modified to Phosphothreonine. The Protein kinase domain maps to 404–677 (YHESRILGQG…KEVAAELEAL (274 aa)). Residues 410 to 418 (LGQGGQGTV) and Lys-432 contribute to the ATP site. At Tyr-477 the chain carries Phosphotyrosine. Asp-529 acts as the Proton acceptor in catalysis. Phosphothreonine is present on residues Thr-563 and Thr-568. Phosphotyrosine is present on Tyr-576.

Belongs to the protein kinase superfamily. Ser/Thr protein kinase family. As to expression, predominantly expressed in green tissues such as stems and leaves. Detected at organ junctions.

Its subcellular location is the membrane. It catalyses the reaction L-seryl-[protein] + ATP = O-phospho-L-seryl-[protein] + ADP + H(+). It carries out the reaction L-threonyl-[protein] + ATP = O-phospho-L-threonyl-[protein] + ADP + H(+). Serine/threonine-protein kinase that may function as a signaling receptor of extracellular matrix component. Binding to pectin may have significance in the control of cell expansion, morphogenesis and development. This is Wall-associated receptor kinase 2 (WAK2) from Arabidopsis thaliana (Mouse-ear cress).